The sequence spans 580 residues: Guanine nucleotide-binding protein alpha-4 subunit (580 aa).

Over residues 1–10 the composition is skewed to polar residues; that stretch reads MSPSVSSPQL. Positions 1–28 are disordered; sequence MSPSVSSPQLRHTKSNRAISRIDRTDPL. In terms of domain architecture, G-alpha spans 93-579; the sequence is RVYKMVLLGQ…RENLKLTGLV (487 aa). The segment at 96-109 is G1 motif; sequence KMVLLGQAGAGKTT. Residue 101–108 coordinates GTP; sequence GQAGAGKT. 2 disordered regions span residues 160–196 and 302–325; these read KSSE…PNDA and GRAA…KDNS. Low complexity predominate over residues 167 to 183; it reads LESSTSASTSTSASASS. Positions 387-395 are G2 motif; that stretch reads DILHSRVRT. Residues 389–395, 415–419, 484–487, and A551 contribute to the GTP site; these read LHSRVRT, DVGGS, and NKID. Residue T395 participates in Mg(2+) binding. Residues 411–420 are G3 motif; it reads YRIYDVGGSR. The segment at 480–487 is G4 motif; sequence ILFLNKID. Positions 549–554 are G5 motif; that stretch reads TVATST.

Belongs to the G-alpha family. G proteins are composed of 3 units; alpha, beta and gamma. The alpha chain contains the guanine nucleotide binding site.

Its function is as follows. Guanine nucleotide-binding proteins (G proteins) are involved as modulators or transducers in various transmembrane signaling systems. This is Guanine nucleotide-binding protein alpha-4 subunit (GPA4) from Mycosarcoma maydis (Corn smut fungus).